The primary structure comprises 412 residues: Light-independent protochlorophyllide reductase subunit N (412 aa).

The [4Fe-4S] cluster site is built by Cys-16, Cys-41, and Cys-102.

This sequence belongs to the BchN/ChlN family. In terms of assembly, protochlorophyllide reductase is composed of three subunits; ChlL, ChlN and ChlB. Forms a heterotetramer of two ChlB and two ChlN subunits. [4Fe-4S] cluster serves as cofactor.

It carries out the reaction chlorophyllide a + oxidized 2[4Fe-4S]-[ferredoxin] + 2 ADP + 2 phosphate = protochlorophyllide a + reduced 2[4Fe-4S]-[ferredoxin] + 2 ATP + 2 H2O. It participates in porphyrin-containing compound metabolism; chlorophyll biosynthesis (light-independent). Functionally, component of the dark-operative protochlorophyllide reductase (DPOR) that uses Mg-ATP and reduced ferredoxin to reduce ring D of protochlorophyllide (Pchlide) to form chlorophyllide a (Chlide). This reaction is light-independent. The NB-protein (ChlN-ChlB) is the catalytic component of the complex. The sequence is that of Light-independent protochlorophyllide reductase subunit N from Synechococcus sp. (strain RCC307).